The chain runs to 506 residues: Glucosidase 2 subunit beta (506 aa).

A signal peptide spans 1 to 23 (MKFSQWYTLTAPLLISSLYTVNA). The cysteines at positions 86 and 108 are disulfide-linked. Coiled-coil stretches lie at residues 172–243 (SLVA…LYET) and 338–374 (ESYRRFEAAQRDLDAAEENEKSLEKEHTKLMHELEYH). Residues 279–474 (ESCNNHLSML…KMKSPAACSP (196 aa)) form the MRH domain. Intrachain disulfides connect Cys-431–Cys-460 and Cys-445–Cys-472. Positions 503–506 (VDEL) match the ER retrieval sequence motif.

In terms of assembly, heterodimer of a catalytic subunit alpha (gls2) and a subunit beta (gtb1).

The protein resides in the endoplasmic reticulum. Its function is as follows. Subunit of glucosidase 2, which cleaves sequentially the 2 innermost alpha-1,3-linked glucose residues from the Glc(2)Man(9)GlcNAc(2) oligosaccharide precursor of immature glycoproteins in the endoplasmic reticulum (ER). Specifically required for the cleavage of the final glucose. The subunit beta retains the catalytic subunit alpha in the ER. In Schizosaccharomyces pombe (strain 972 / ATCC 24843) (Fission yeast), this protein is Glucosidase 2 subunit beta (gtb1).